The primary structure comprises 418 residues: Protein fuzzy homolog (418 aa).

Belongs to the fuzzy family. Component of the CPLANE (ciliogenesis and planar polarity effectors) complex, composed of INTU, FUZ and WDPCP. Interacts with CPLANE2. Interacts with CPLANE1.

It is found in the cytoplasm. The protein resides in the cytoskeleton. Its subcellular location is the cilium basal body. Its function is as follows. Probable planar cell polarity effector involved in cilium biogenesis. May regulate protein and membrane transport to the cilium. Proposed to function as core component of the CPLANE (ciliogenesis and planar polarity effectors) complex involved in the recruitment of peripheral IFT-A proteins to basal bodies. May regulate the morphogenesis of hair follicles which depends on functional primary cilia. Binds phosphatidylinositol 3-phosphate with highest affinity, followed by phosphatidylinositol 4-phosphate and phosphatidylinositol 5-phosphate. This Homo sapiens (Human) protein is Protein fuzzy homolog (FUZ).